The following is a 678-amino-acid chain: DNA ligase (678 aa).

NAD(+)-binding positions include 34-38 (DSEYD), 83-84 (SL), and E114. The active-site N6-AMP-lysine intermediate is K116. Residues R137, E176, K293, and K317 each coordinate NAD(+). C411, C414, C429, and C435 together coordinate Zn(2+). The BRCT domain occupies 594–678 (PTRQPLNGES…LMAGYGQTLS (85 aa)).

Belongs to the NAD-dependent DNA ligase family. LigA subfamily. Mg(2+) serves as cofactor. Mn(2+) is required as a cofactor.

The catalysed reaction is NAD(+) + (deoxyribonucleotide)n-3'-hydroxyl + 5'-phospho-(deoxyribonucleotide)m = (deoxyribonucleotide)n+m + AMP + beta-nicotinamide D-nucleotide.. In terms of biological role, DNA ligase that catalyzes the formation of phosphodiester linkages between 5'-phosphoryl and 3'-hydroxyl groups in double-stranded DNA using NAD as a coenzyme and as the energy source for the reaction. It is essential for DNA replication and repair of damaged DNA. This is DNA ligase from Acinetobacter baumannii (strain SDF).